A 155-amino-acid polypeptide reads, in one-letter code: Ribosomal RNA large subunit methyltransferase H (155 aa).

Residues L72, G103, and 122–127 (LSPLTL) contribute to the S-adenosyl-L-methionine site.

Belongs to the RNA methyltransferase RlmH family. As to quaternary structure, homodimer.

It is found in the cytoplasm. It carries out the reaction pseudouridine(1915) in 23S rRNA + S-adenosyl-L-methionine = N(3)-methylpseudouridine(1915) in 23S rRNA + S-adenosyl-L-homocysteine + H(+). Functionally, specifically methylates the pseudouridine at position 1915 (m3Psi1915) in 23S rRNA. This chain is Ribosomal RNA large subunit methyltransferase H, found in Aeromonas hydrophila subsp. hydrophila (strain ATCC 7966 / DSM 30187 / BCRC 13018 / CCUG 14551 / JCM 1027 / KCTC 2358 / NCIMB 9240 / NCTC 8049).